We begin with the raw amino-acid sequence, 453 residues long: tRNA modification GTPase MnmE (453 aa).

3 residues coordinate (6S)-5-formyl-5,6,7,8-tetrahydrofolate: Arg-22, Glu-79, and Lys-119. One can recognise a TrmE-type G domain in the interval 215-376 (GMKVVIAGRP…LKAHLKSLMG (162 aa)). A K(+)-binding site is contributed by Asn-225. GTP contacts are provided by residues 225 to 230 (NAGKSS), 244 to 250 (TEIAGTT), 269 to 272 (DTAG), and 334 to 337 (NKAD). Mg(2+) is bound at residue Ser-229. 3 residues coordinate K(+): Thr-244, Ile-246, and Thr-249. Residue Thr-250 participates in Mg(2+) binding. Lys-453 lines the (6S)-5-formyl-5,6,7,8-tetrahydrofolate pocket.

The protein belongs to the TRAFAC class TrmE-Era-EngA-EngB-Septin-like GTPase superfamily. TrmE GTPase family. As to quaternary structure, homodimer. Heterotetramer of two MnmE and two MnmG subunits. The cofactor is K(+).

The protein localises to the cytoplasm. Functionally, exhibits a very high intrinsic GTPase hydrolysis rate. Involved in the addition of a carboxymethylaminomethyl (cmnm) group at the wobble position (U34) of certain tRNAs, forming tRNA-cmnm(5)s(2)U34. The chain is tRNA modification GTPase MnmE from Shewanella loihica (strain ATCC BAA-1088 / PV-4).